The following is a 213-amino-acid chain: High frequency lysogenization protein HflD homolog (213 aa).

Residues glutamine 79–glutamine 126 are a coiled coil.

It belongs to the HflD family.

Its subcellular location is the cytoplasm. The protein resides in the cell inner membrane. This is High frequency lysogenization protein HflD homolog from Shigella boydii serotype 18 (strain CDC 3083-94 / BS512).